The sequence spans 268 residues: Small ribosomal subunit protein eS1 (268 aa).

The tract at residues 1-21 is disordered; it reads MAVGKNKGLSKGGKKGGKKKV.

The protein belongs to the eukaryotic ribosomal protein eS1 family. In terms of assembly, component of the small ribosomal subunit. Mature ribosomes consist of a small (40S) and a large (60S) subunit. The 40S subunit contains about 33 different proteins and 1 molecule of RNA (18S). The 60S subunit contains about 49 different proteins and 3 molecules of RNA (28S, 5.8S and 5S).

It localises to the cytoplasm. Essential for oogenesis; required for late follicle cell development. The polypeptide is Small ribosomal subunit protein eS1 (Drosophila willistoni (Fruit fly)).